A 398-amino-acid polypeptide reads, in one-letter code: Protein-glutamate methylesterase/protein-glutamine glutaminase (398 aa).

One can recognise a Response regulatory domain in the interval 4–121 (KVLVVDDSSF…ATNKDDAILL (118 aa)). Asp-55 is modified (4-aspartylphosphate). Residues 133–200 (RMYRSSSLTP…SANPTTSSIS (68 aa)) form a disordered region. Composition is skewed to polar residues over residues 136–146 (RSSSLTPTSTI) and 168–200 (RLAS…SSIS). The CheB-type methylesterase domain occupies 205 to 398 (SGKQYKLLLI…EAILKESSRG (194 aa)). Residues Ser-217, His-244, and Asp-340 contribute to the active site.

It belongs to the CheB family. In terms of processing, phosphorylated by CheA. Phosphorylation of the N-terminal regulatory domain activates the methylesterase activity.

Its subcellular location is the cytoplasm. It carries out the reaction [protein]-L-glutamate 5-O-methyl ester + H2O = L-glutamyl-[protein] + methanol + H(+). The enzyme catalyses L-glutaminyl-[protein] + H2O = L-glutamyl-[protein] + NH4(+). Its function is as follows. Involved in chemotaxis. Part of a chemotaxis signal transduction system that modulates chemotaxis in response to various stimuli. Catalyzes the demethylation of specific methylglutamate residues introduced into the chemoreceptors (methyl-accepting chemotaxis proteins or MCP) by CheR. Also mediates the irreversible deamidation of specific glutamine residues to glutamic acid. In Shewanella frigidimarina (strain NCIMB 400), this protein is Protein-glutamate methylesterase/protein-glutamine glutaminase.